Here is a 637-residue protein sequence, read N- to C-terminus: Chaperone protein HtpG (637 aa).

Residues Met-1–Arg-345 form an a; substrate-binding region. Residues Glu-346–Lys-562 form a b region. The tract at residues Leu-563–Lys-637 is c.

It belongs to the heat shock protein 90 family. As to quaternary structure, homodimer.

It localises to the cytoplasm. In terms of biological role, molecular chaperone. Has ATPase activity. This is Chaperone protein HtpG from Shewanella putrefaciens (strain CN-32 / ATCC BAA-453).